Reading from the N-terminus, the 579-residue chain is General transcription and DNA repair factor IIH subunit TFB1-3 (579 aa).

BSD domains lie at Leu107–Ser161 and Arg186–Ser238.

This sequence belongs to the TFB1 family. Component of the 7-subunit TFIIH core complex composed of XPB, XPD, TFB1/GTF2H1, GTF2H2/P44, TFB4/GTF2H3, TFB2/GTF2H4 and TFB5/GTF2H5, which is active in NER. The core complex associates with the 3-subunit CDK-activating kinase (CAK) module composed of CYCH1/cyclin H1, CDKD and MAT1/At4g30820 to form the 10-subunit holoenzyme (holo-TFIIH) active in transcription.

The protein localises to the nucleus. Component of the general transcription and DNA repair factor IIH (TFIIH) core complex, which is involved in general and transcription-coupled nucleotide excision repair (NER) of damaged DNA and, when complexed to CAK, in RNA transcription by RNA polymerase II. In NER, TFIIH acts by opening DNA around the lesion to allow the excision of the damaged oligonucleotide and its replacement by a new DNA fragment. In transcription, TFIIH has an essential role in transcription initiation. When the pre-initiation complex (PIC) has been established, TFIIH is required for promoter opening and promoter escape. Phosphorylation of the C-terminal tail (CTD) of the largest subunit of RNA polymerase II by the kinase module CAK controls the initiation of transcription. This is General transcription and DNA repair factor IIH subunit TFB1-3 from Arabidopsis thaliana (Mouse-ear cress).